The sequence spans 370 residues: Endopolygalacturonase A (370 aa).

Positions 1–19 (MPSAKPLFCLATLAGAALA) are cleaved as a signal peptide. The propeptide occupies 20–32 (APAPSRATDFNKR). A disulfide bridge connects residues Cys-35 and Cys-50. 6 PbH1 repeats span residues 162–192 (SDNLVIEDVTIDNSDGDSEGGHNTDGFDISE), 193–214 (STYITITGATVKNQGDCVAINS), 215–235 (GENIYFSGGTCSGGHGLSIGS), 244–265 (VKNVTFIDSTVSDSENGVRIKT), 273–295 (VEDITYSNIQLSGISDYGIVIEQ), and 307–352 (SNGV…DITG). A disulfide bridge links Cys-209 with Cys-225. His-229 is an active-site residue. Asn-246 carries N-linked (GlcNAc...) asparagine glycosylation. 2 disulfide bridges follow: Cys-335–Cys-340 and Cys-359–Cys-368.

Belongs to the glycosyl hydrolase 28 family.

It is found in the secreted. It carries out the reaction (1,4-alpha-D-galacturonosyl)n+m + H2O = (1,4-alpha-D-galacturonosyl)n + (1,4-alpha-D-galacturonosyl)m.. In terms of biological role, involved in maceration and soft-rotting of plant tissue. Hydrolyzes the 1,4-alpha glycosidic bonds of de-esterified pectate in the smooth region of the plant cell wall. The polypeptide is Endopolygalacturonase A (pgaA) (Aspergillus awamori (Black koji mold)).